The chain runs to 294 residues: Endonuclease G, mitochondrial (294 aa).

The N-terminal 44 residues, M1–A44, are a transit peptide targeting the mitochondrion. Residue T125 is modified to Phosphothreonine. H138 functions as the Proton acceptor in the catalytic mechanism. Residue N169 participates in Mg(2+) binding. The segment at A283–S293 is essential for deoxyribonuclease activity.

It belongs to the DNA/RNA non-specific endonuclease family. Homodimer; disulfide-linked. Homodimerization is essential for its activity. Interacts with YWHAG. Mg(2+) is required as a cofactor. In terms of processing, GSK3-beta-mediated phosphorylation at Thr-125 is necessary for its interaction with YWHAG and the induction of autophagy.

Its subcellular location is the mitochondrion. In terms of biological role, endonuclease that preferentially catalyzes the cleavage of double-stranded 5-hydroxymethylcytosine (5hmC)-modified DNA. The 5hmC-modified nucleotide does not increase the binding affinity, but instead increases the efficiency of cutting and specifies the site of cleavage for the modified DNAs. Shows significantly higher affinity for four-stranded Holliday junction over duplex and single-stranded DNAs. Promotes conservative recombination when the DNA is 5hmC-modified. Promotes autophagy through the suppression of mTOR by its phosphorylation-mediated interaction with YWHAG and its endonuclease activity-mediated DNA damage response. GSK3-beta mediated phosphorylation of ENDOG enhances its interaction with YWHAG, leading to the release of TSC2 and PIK3C3 from YWHAG resulting in mTOR pathway suppression and autophagy initiation. Promotes cleavage of mtDNA in response to oxidative and nitrosative stress, in turn inducing compensatory mtDNA replication. The chain is Endonuclease G, mitochondrial (Endog) from Mus musculus (Mouse).